Here is a 698-residue protein sequence, read N- to C-terminus: Interleukin-17 receptor C (698 aa).

The signal sequence occupies residues 1-21 (MPVSWFLLSLALGRNPVVVSL). Over 22–464 (ERLMEPQDTA…CPMDKYIHRR (443 aa)) the chain is Extracellular. N-linked (GlcNAc...) asparagine glycosylation occurs at Asn182. Cys190 and Cys202 are oxidised to a cystine. N-linked (GlcNAc...) asparagine glycans are attached at residues Asn209, Asn249, Asn255, and Asn259. Disulfide bonds link Cys266/Cys316, Cys268/Cys284, Cys325/Cys334, Cys364/Cys378, Cys406/Cys413, and Cys440/Cys455. A helical transmembrane segment spans residues 465-485 (WVLVWLACLLLAAALFFFLLL). The Cytoplasmic segment spans residues 486 to 698 (KKDRRKAARG…WDLGPCTTLE (213 aa)). The region spanning 496–645 (SRTALLLHSA…LPSQLPAFLD (150 aa)) is the SEFIR domain.

Homodimer; disulfide-linked. Heterodimer with IL17RA. Heterodimerization with IL17RA is independent of the cytoplasmic tail. Associates with non-glycosylated IL17RA constitutively. Binding of IL17A and IL17F induces association with glycosylated IL17RA. Forms complexes with 2:1 binding stoichiometry: two receptor chains for one interleukin molecule. IL17A homodimer preferentially drives the formation of IL17RA-IL17RC heterodimeric receptor complex, whereas IL17F homodimer forms predominantly complexes with IL17RC homodimer. IL17A-IL17F forms complexes with IL17RA-IL17RC, but with lower affinity when compared to IL17A homodimer. IL17RC chain cannot distinguish between IL17A and IL17F molecules, potentially enabling the formation of topologically distinct complexes. Interacts (through SEFIR domain and extended downstream region) with TRAF3IP2/ACT1 (phosphorylated). In terms of tissue distribution, highly expressed in colonic epithelial cells. Expressed in lung epithelial cells. Expressed in macrophages. Highly expressed in B-1a B cells and at a lower extent in B-1b and B-2 B cells (at protein level).

The protein resides in the cell membrane. Receptor for IL17A and IL17F, major effector cytokines of innate and adaptive immune system involved in antimicrobial host defense and maintenance of tissue integrity. Receptor for IL17A and IL17F homodimers as part of a heterodimeric complex with IL17RA. Receptor for the heterodimer formed by IL17A and IL17B as part of a heterodimeric complex with IL17RA. Has also been shown to be the cognate receptor for IL17F and to bind IL17A with high affinity without the need for IL17RA. Upon binding of IL17F homodimer triggers downstream activation of TRAF6 and NF-kappa-B signaling pathway. Induces transcriptional activation of IL33, a potent cytokine that stimulates group 2 innate lymphoid cells and adaptive T-helper 2 cells involved in pulmonary allergic response to fungi. Promotes sympathetic innervation of peripheral organs by coordinating the communication between gamma-delta T cells and parenchymal cells. Stimulates sympathetic innervation of thermogenic adipose tissue by driving TGFB1 expression. Binding of IL17A-IL17F to IL17RA-IL17RC heterodimeric receptor complex triggers homotypic interaction of IL17RA and IL17RC chains with TRAF3IP2 adapter through SEFIR domains. This leads to downstream TRAF6-mediated activation of NF-kappa-B and MAPkinase pathways ultimately resulting in transcriptional activation of cytokines, chemokines, antimicrobial peptides and matrix metalloproteinases, with potential strong immune inflammation. Primarily induces neutrophil activation and recruitment at infection and inflammatory sites. Stimulates the production of antimicrobial beta-defensins DEFB1, DEFB103A, and DEFB104A by mucosal epithelial cells, limiting the entry of microbes through the epithelial barriers. The sequence is that of Interleukin-17 receptor C (Il17rc) from Mus musculus (Mouse).